Consider the following 152-residue polypeptide: CASP-like protein 5C1 (152 aa).

Topologically, residues 1–12 (MVRTTASFGTSS) are cytoplasmic. The helical transmembrane segment at 13–33 (SFVLRLGQTLFSSASLLFMCF) threads the bilayer. At 34–44 (NDDEDFYAYTT) the chain is on the extracellular side. The chain crosses the membrane as a helical span at residues 45 to 65 (FCYLVTVMGLVTPWSVTLALM). At 66 to 80 (EAYSILVKKLPMQAT) the chain is on the cytoplasmic side. Residues 81–101 (VISVIVAGDFVLSFLSLGGAC) traverse the membrane as a helical segment. Residues 102 to 126 (STASVAVLLMDAGEKQCDRYKLSAT) are Extracellular-facing. The helical transmembrane segment at 127–147 (MAFLSSFLSFASTFFNFCLLP) threads the bilayer. Over 148–152 (SLMSH) the chain is Cytoplasmic.

The protein belongs to the Casparian strip membrane proteins (CASP) family. In terms of assembly, homodimer and heterodimers.

It localises to the cell membrane. In Arabidopsis thaliana (Mouse-ear cress), this protein is CASP-like protein 5C1.